The following is a 248-amino-acid chain: 4-hydroxy-tetrahydrodipicolinate reductase (248 aa).

NAD(+)-binding positions include Gly8–Val13, Asp34, Gly76–Thr78, and Ala103–Phe106. His133 serves as the catalytic Proton donor/acceptor. (S)-2,3,4,5-tetrahydrodipicolinate is bound at residue His134. Catalysis depends on Lys137, which acts as the Proton donor. Residue Gly143–Thr144 participates in (S)-2,3,4,5-tetrahydrodipicolinate binding.

This sequence belongs to the DapB family.

Its subcellular location is the cytoplasm. It catalyses the reaction (S)-2,3,4,5-tetrahydrodipicolinate + NAD(+) + H2O = (2S,4S)-4-hydroxy-2,3,4,5-tetrahydrodipicolinate + NADH + H(+). The enzyme catalyses (S)-2,3,4,5-tetrahydrodipicolinate + NADP(+) + H2O = (2S,4S)-4-hydroxy-2,3,4,5-tetrahydrodipicolinate + NADPH + H(+). It participates in amino-acid biosynthesis; L-lysine biosynthesis via DAP pathway; (S)-tetrahydrodipicolinate from L-aspartate: step 4/4. In terms of biological role, catalyzes the conversion of 4-hydroxy-tetrahydrodipicolinate (HTPA) to tetrahydrodipicolinate. This Corynebacterium urealyticum (strain ATCC 43042 / DSM 7109) protein is 4-hydroxy-tetrahydrodipicolinate reductase.